Here is a 267-residue protein sequence, read N- to C-terminus: MRFLCLHGYAFSVEVLQQQMEPITAHLPSDWEYEFLEAGMEPTQLMLPNLKQVPKPNSSWYNFPYPEDVEEAYERLAAYVESEGPFDGIWGFSQGGSMAALLLLMHQAEHPDTPYPFKMAIFTSAFLPHSFDNGVISWDLTEKNTLEPAYLPGRIDVSHGKKLDWKKDLHTSIEYDMINAVKDELDFPVDLLLRWRPSDIPEKIPVPSVHVRGLKDHYSFVDESVYELFDPDMARKMTHRGGHNFPRYNEELVHFAELIIETVVSLH.

Residues Ser93, Asp183, and His243 each act as charge relay system in the active site.

Belongs to the AB hydrolase 3 family.

It participates in mycotoxin biosynthesis. Functionally, hydrolase; part of the gene cluster that mediates the biosynthesis of fusaric acid, a mycotoxin with low to moderate toxicity to animals and humans, but with high phytotoxic properties. L-aspartate is suggested as fusaric acid amino acid precursor that is activated and further processed to O-acetyl-L-homoserine by cluster enzymes aspartate kinase FUB3 and homoserine O-acetyltransferase FUB5, as well as enzymes of the primary metabolism. The polyketide synthase (PKS) FUB1 generates the triketide trans-2-hexenal which is presumptively released by the hydrolase FUB4 and linked to the NRPS-bound amino acid precursor by NAD(P)-dependent dehydrogenase FUB6. FUB1, FUB4, and the non-canonical NRPS Fub8 may form an enzyme complex. Further processing of the NRPS-bound intermediate might be carried out by FUB6 and the sulfhydrylase FUB7, enabling a spontaneous electrocyclization to close the carbon backbone of fusaric acid. Dihydrofusaric acid is likely to be released via reduction by the thioester reductase (TR) domain of FUB8 whereupon the final oxidation to fusaric acid may (also) be performed by the FMN-dependent dehydrogenase FUB9. The sequence is that of Hydrolase FUB4 from Gibberella moniliformis (strain M3125 / FGSC 7600) (Maize ear and stalk rot fungus).